The chain runs to 400 residues: Nicotinate phosphoribosyltransferase (400 aa).

Phosphohistidine; by autocatalysis is present on His220.

Belongs to the NAPRTase family. Transiently phosphorylated on a His residue during the reaction cycle. Phosphorylation strongly increases the affinity for substrates and increases the rate of nicotinate D-ribonucleotide production. Dephosphorylation regenerates the low-affinity form of the enzyme, leading to product release.

It carries out the reaction nicotinate + 5-phospho-alpha-D-ribose 1-diphosphate + ATP + H2O = nicotinate beta-D-ribonucleotide + ADP + phosphate + diphosphate. The protein operates within cofactor biosynthesis; NAD(+) biosynthesis; nicotinate D-ribonucleotide from nicotinate: step 1/1. In terms of biological role, catalyzes the synthesis of beta-nicotinate D-ribonucleotide from nicotinate and 5-phospho-D-ribose 1-phosphate at the expense of ATP. This is Nicotinate phosphoribosyltransferase from Escherichia coli (strain K12 / MC4100 / BW2952).